Consider the following 93-residue polypeptide: Allatostatin C (93 aa).

The signal sequence occupies residues 1-23 (MSSVRNIAALALVLLVLAEWSAA). Positions 24 to 61 (MPTTDKDKERLLNTVDLIDDDGSIETALINYLFTKQIV) are excised as a propeptide. A disulfide bond links cysteine 83 and cysteine 90.

The protein localises to the secreted. Functionally, inhibits juvenile hormone biosynthesis. The sequence is that of Allatostatin C from Camponotus floridanus (Florida carpenter ant).